Reading from the N-terminus, the 536-residue chain is Chromosomal replication initiator protein DnaA (536 aa).

A domain I, interacts with DnaA modulators region spans residues 1–72 (MNDFWQHCSA…DLARDFWNAP (72 aa)). Residues 72 to 199 (PIEVQFVLDP…EAADSMYERS (128 aa)) form a domain II region. The segment at 97 to 121 (RAPLPAANPAPVTAGPAPSGAADAN) is disordered. The span at 105–121 (PAPVTAGPAPSGAADAN) shows a compositional bias: low complexity. The domain III, AAA+ region stretch occupies residues 200–416 (KLNPVLTFDN…GALRKILAYS (217 aa)). The ATP site is built by G244, G246, K247, and T248. Residues 417–536 (KFHGREITIE…LHVLEQTLKG (120 aa)) form a domain IV, binds dsDNA region.

It belongs to the DnaA family. In terms of assembly, oligomerizes as a right-handed, spiral filament on DNA at oriC.

The protein localises to the cytoplasm. In terms of biological role, plays an essential role in the initiation and regulation of chromosomal replication. ATP-DnaA binds to the origin of replication (oriC) to initiate formation of the DNA replication initiation complex once per cell cycle. Binds the DnaA box (a 9 base pair repeat at the origin) and separates the double-stranded (ds)DNA. Forms a right-handed helical filament on oriC DNA; dsDNA binds to the exterior of the filament while single-stranded (ss)DNA is stabiized in the filament's interior. The ATP-DnaA-oriC complex binds and stabilizes one strand of the AT-rich DNA unwinding element (DUE), permitting loading of DNA polymerase. After initiation quickly degrades to an ADP-DnaA complex that is not apt for DNA replication. Binds acidic phospholipids. The sequence is that of Chromosomal replication initiator protein DnaA from Burkholderia thailandensis (strain ATCC 700388 / DSM 13276 / CCUG 48851 / CIP 106301 / E264).